Consider the following 72-residue polypeptide: UPF0154 protein YneF (72 aa).

Residues 4–24 form a helical membrane-spanning segment; it reads WVGILVGVVALLIGVALGFFI.

This sequence belongs to the UPF0154 family.

It is found in the membrane. The chain is UPF0154 protein YneF (yneF) from Bacillus subtilis (strain 168).